Consider the following 314-residue polypeptide: DNA-directed RNA polymerase subunit alpha (314 aa).

Residues 1-227 form an alpha N-terminal domain (alpha-NTD) region; it reads MTYFQIECVE…SLFYPLTNLN (227 aa). An alpha C-terminal domain (alpha-CTD) region spans residues 239–314; it reads EEEINQVLIE…LPKEKNIQNT (76 aa).

This sequence belongs to the RNA polymerase alpha chain family. In terms of assembly, in plastids the minimal PEP RNA polymerase catalytic core is composed of four subunits: alpha, beta, beta', and beta''. When a (nuclear-encoded) sigma factor is associated with the core the holoenzyme is formed, which can initiate transcription.

It localises to the plastid. The protein localises to the chloroplast. It catalyses the reaction RNA(n) + a ribonucleoside 5'-triphosphate = RNA(n+1) + diphosphate. Functionally, DNA-dependent RNA polymerase catalyzes the transcription of DNA into RNA using the four ribonucleoside triphosphates as substrates. This Gracilaria tenuistipitata var. liui (Red alga) protein is DNA-directed RNA polymerase subunit alpha.